A 1080-amino-acid chain; its full sequence is Isoleucine--tRNA ligase (1080 aa).

Positions 48-58 (PYASGSIHLGT) match the 'HIGH' region motif. The short motif at 628-632 (KMSKS) is the 'KMSKS' region element. Residue Lys631 coordinates ATP.

This sequence belongs to the class-I aminoacyl-tRNA synthetase family. IleS type 2 subfamily. In terms of assembly, monomer. Zn(2+) is required as a cofactor.

Its subcellular location is the cytoplasm. The catalysed reaction is tRNA(Ile) + L-isoleucine + ATP = L-isoleucyl-tRNA(Ile) + AMP + diphosphate. Its function is as follows. Catalyzes the attachment of isoleucine to tRNA(Ile). As IleRS can inadvertently accommodate and process structurally similar amino acids such as valine, to avoid such errors it has two additional distinct tRNA(Ile)-dependent editing activities. One activity is designated as 'pretransfer' editing and involves the hydrolysis of activated Val-AMP. The other activity is designated 'posttransfer' editing and involves deacylation of mischarged Val-tRNA(Ile). The sequence is that of Isoleucine--tRNA ligase from Methanopyrus kandleri (strain AV19 / DSM 6324 / JCM 9639 / NBRC 100938).